Here is a 391-residue protein sequence, read N- to C-terminus: 3-ketoacyl-CoA thiolase (391 aa).

Cys95 serves as the catalytic Acyl-thioester intermediate. Active-site proton acceptor residues include His347 and Cys377.

It belongs to the thiolase-like superfamily. Thiolase family. In terms of assembly, heterotetramer of two alpha chains (FadB) and two beta chains (FadA).

Its subcellular location is the cytoplasm. It catalyses the reaction an acyl-CoA + acetyl-CoA = a 3-oxoacyl-CoA + CoA. It participates in lipid metabolism; fatty acid beta-oxidation. In terms of biological role, catalyzes the final step of fatty acid oxidation in which acetyl-CoA is released and the CoA ester of a fatty acid two carbons shorter is formed. This Marinomonas sp. (strain MWYL1) protein is 3-ketoacyl-CoA thiolase.